The following is an 849-amino-acid chain: ATP-binding cassette sub-family B member 6 (849 aa).

Residues 1–25 (MVRLGSYCEHNGSISQAWLDSGLSP) are Lumenal-facing. Residues 1-195 (MVRLGSYCEH…TLFLFVLGIR (195 aa)) form a required for the lysosomal targeting region. Residues 1 to 227 (MVRLGSYCEH…SQPLLRDPNQ (227 aa)) are required for ATPase activity. The cysteines at positions 8 and 26 are disulfide-linked. N-linked (GlcNAc...) asparagine glycosylation is present at Asn11. A helical membrane pass occupies residues 26 to 46 (CFYFTLVPSVLLSFSFLLGAL). Residues 47 to 72 (QSALYARHSTTMEPKYIPRSRLYRLQ) lie on the Cytoplasmic side of the membrane. The helical transmembrane segment at 73 to 93 (IVLSVVLILQSVIGLIWQAAG) threads the bilayer. The Lumenal portion of the chain corresponds to 94–98 (TDVVY). A helical transmembrane segment spans residues 99 to 119 (GYMIVHGCLSVVAWGFSLWLL). Topologically, residues 120–136 (HLERTRALVREKSRGHG) are cytoplasmic. Residues 137–157 (VVLLLFWALAFAAENLAFISW) traverse the membrane as a helical segment. Over 158–173 (QSPNWWWLSRDTVPQK) the chain is Lumenal. A helical membrane pass occupies residues 174–194 (VQFGLWITRYVCTLFLFVLGI). Residues 195-254 (RAPGRPRKPYIVLINEDERDVETSQPLLRDPNQSTWQGFKKKLLLVMQYIWPRRNIPLQL) are Cytoplasmic-facing. The chain crosses the membrane as a helical span at residues 255–275 (LVALCMGLMGLERAINVFVPI). The ABC transmembrane type-1 domain maps to 256 to 547 (VALCMGLMGL…FGTYYRMIQS (292 aa)). Residues 276 to 291 (YAKKIVDGLTEDSTWN) are Lumenal-facing. A helical transmembrane segment spans residues 292 to 312 (ILAVTVCIYVLLKFLQGGGAG). Topologically, residues 313–373 (TTGFLSNLRT…VDRGTSSINS (61 aa)) are cytoplasmic. The chain crosses the membrane as a helical span at residues 374-394 (LLSYIVFSILPTIADIVIGIV). Over 395–401 (YFTSSFN) the chain is Lumenal. Residues 402–422 (AWFGLIIFVCMTLYLTLTIII) traverse the membrane as a helical segment. Topologically, residues 423–492 (TEWRTKYRRE…ASLAMLNQTQ (70 aa)) are cytoplasmic. The helical transmembrane segment at 493-513 (NLIIGLGLLAGSLLCAYFVTE) threads the bilayer. Residues 514 to 520 (NKFKVGD) lie on the Lumenal side of the membrane. A helical transmembrane segment spans residues 521–541 (YVLFGTYIIQLYTPLNWFGTY). Residues 542-849 (YRMIQSSFID…PPKATPRRGH (308 aa)) lie on the Cytoplasmic side of the membrane. Residues 581–815 (IEFENVHFSY…GGVYAGMWQK (235 aa)) enclose the ABC transporter domain. ATP is bound by residues Tyr590 and 614–625 (GPSGSGKSTIIR). Positions 814-825 (QKQQSGSESSSD) are enriched in low complexity. A disordered region spans residues 814-849 (QKQQSGSESSSDSDSERKDRTSEKLQPPKATPRRGH). A compositionally biased stretch (basic and acidic residues) spans 827–836 (DSERKDRTSE).

Belongs to the ABC transporter superfamily. ABCB family. Heavy Metal importer (TC 3.A.1.210) subfamily. As to quaternary structure, homodimer. N-glycosylated.

Its subcellular location is the cell membrane. The protein localises to the mitochondrion outer membrane. It is found in the endoplasmic reticulum membrane. The protein resides in the golgi apparatus membrane. It localises to the endosome membrane. Its subcellular location is the lysosome membrane. The protein localises to the late endosome membrane. It is found in the early endosome membrane. The protein resides in the secreted. It localises to the extracellular exosome. Its subcellular location is the mitochondrion. The protein localises to the endosome. It is found in the multivesicular body membrane. The protein resides in the melanosome membrane. It carries out the reaction heme b(in) + ATP + H2O = heme b(out) + ADP + phosphate + H(+). It catalyses the reaction coproporphyrin III(in) + ATP + H2O = coproporphyrin III(out) + ADP + phosphate + H(+). The catalysed reaction is pheophorbide a(in) + ATP + H2O = pheophorbide a(out) + ADP + phosphate + H(+). The enzyme catalyses coproporphyrinogen III(in) + ATP + H2O = coproporphyrinogen III(out) + ADP + phosphate + H(+). It carries out the reaction protoporphyrin IX(in) + ATP + H2O = protoporphyrin IX(out) + ADP + phosphate + H(+). It catalyses the reaction coproporphyrin I(in) + ATP + H2O = coproporphyrin I(out) + ADP + phosphate + H(+). The catalysed reaction is uroporphyrin I(in) + ATP + H2O = uroporphyrin I(out) + ADP + phosphate + H(+). The enzyme catalyses uroporphyrin III(in) + ATP + H2O = uroporphyrin III(out) + ADP + phosphate + H(+). In terms of biological role, ATP-dependent transporter that catalyzes the transport of a broad-spectrum of porphyrins from the cytoplasm to the extracellular space through the plasma membrane or into the vesicle lumen. May also function as an ATP-dependent importer of porphyrins from the cytoplasm into the mitochondria, in turn may participate in the de novo heme biosynthesis regulation and in the coordination of heme and iron homeostasis during phenylhydrazine stress. May also play a key role in the early steps of melanogenesis producing PMEL amyloid fibrils. In vitro, it confers to cells a resistance to toxic metal such as arsenic and cadmium and against chemotherapeutics agent such as 5-fluorouracil, SN-38 and vincristin. In addition may play a role in the transition metal homeostasis. The protein is ATP-binding cassette sub-family B member 6 (abcb6) of Xenopus tropicalis (Western clawed frog).